The chain runs to 362 residues: Phosphoserine aminotransferase (362 aa).

The L-glutamate site is built by serine 9 and arginine 42. Residues 76–77 (GR), tryptophan 102, threonine 153, aspartate 174, and glutamine 197 contribute to the pyridoxal 5'-phosphate site. An N6-(pyridoxal phosphate)lysine modification is found at lysine 198. 239–240 (NT) contacts pyridoxal 5'-phosphate.

Belongs to the class-V pyridoxal-phosphate-dependent aminotransferase family. SerC subfamily. As to quaternary structure, homodimer. It depends on pyridoxal 5'-phosphate as a cofactor.

Its subcellular location is the cytoplasm. It carries out the reaction O-phospho-L-serine + 2-oxoglutarate = 3-phosphooxypyruvate + L-glutamate. The enzyme catalyses 4-(phosphooxy)-L-threonine + 2-oxoglutarate = (R)-3-hydroxy-2-oxo-4-phosphooxybutanoate + L-glutamate. It functions in the pathway amino-acid biosynthesis; L-serine biosynthesis; L-serine from 3-phospho-D-glycerate: step 2/3. The protein operates within cofactor biosynthesis; pyridoxine 5'-phosphate biosynthesis; pyridoxine 5'-phosphate from D-erythrose 4-phosphate: step 3/5. Catalyzes the reversible conversion of 3-phosphohydroxypyruvate to phosphoserine and of 3-hydroxy-2-oxo-4-phosphonooxybutanoate to phosphohydroxythreonine. The sequence is that of Phosphoserine aminotransferase from Escherichia coli O139:H28 (strain E24377A / ETEC).